The chain runs to 394 residues: Beta-ketothiolase BktB (394 aa).

The active-site Acyl-thioester intermediate is the Cys90. Residues His350 and Cys380 each act as proton acceptor in the active site.

It belongs to the thiolase-like superfamily. Thiolase family.

The enzyme catalyses an acyl-CoA + acetyl-CoA = a 3-oxoacyl-CoA + CoA. It carries out the reaction 2 acetyl-CoA = acetoacetyl-CoA + CoA. Required for efficient production of poly(beta-hydroxybutyrate-co-beta-hydroxyvalerate) (PHBV). Catalyzes the condensation of acetyl-CoA and propionyl-CoA to form beta-ketovaleryl-CoA, and the condensation of two acetyl-CoA molecules to form acetoacetyl-CoA. This Cupriavidus necator (strain ATCC 17699 / DSM 428 / KCTC 22496 / NCIMB 10442 / H16 / Stanier 337) (Ralstonia eutropha) protein is Beta-ketothiolase BktB (bktB).